The chain runs to 71 residues: UPF0352 protein Asuc_0778 (71 aa).

This sequence belongs to the UPF0352 family.

This chain is UPF0352 protein Asuc_0778, found in Actinobacillus succinogenes (strain ATCC 55618 / DSM 22257 / CCUG 43843 / 130Z).